Consider the following 265-residue polypeptide: Sulfur carrier protein FdhD (265 aa).

C107 serves as the catalytic Cysteine persulfide intermediate.

This sequence belongs to the FdhD family.

The protein localises to the cytoplasm. In terms of biological role, required for formate dehydrogenase (FDH) activity. Acts as a sulfur carrier protein that transfers sulfur from IscS to the molybdenum cofactor prior to its insertion into FDH. This Staphylococcus aureus (strain NCTC 8325 / PS 47) protein is Sulfur carrier protein FdhD.